The primary structure comprises 170 residues: Adenine phosphoribosyltransferase (170 aa).

It belongs to the purine/pyrimidine phosphoribosyltransferase family. Homodimer.

It localises to the cytoplasm. It catalyses the reaction AMP + diphosphate = 5-phospho-alpha-D-ribose 1-diphosphate + adenine. Its pathway is purine metabolism; AMP biosynthesis via salvage pathway; AMP from adenine: step 1/1. Functionally, catalyzes a salvage reaction resulting in the formation of AMP, that is energically less costly than de novo synthesis. The sequence is that of Adenine phosphoribosyltransferase from Mesoplasma florum (strain ATCC 33453 / NBRC 100688 / NCTC 11704 / L1) (Acholeplasma florum).